The primary structure comprises 195 residues: Putative NADH dehydrogenase/NAD(P)H nitroreductase CC_0061 (195 aa).

It belongs to the nitroreductase family. HadB/RutE subfamily. Requires FMN as cofactor.

In Caulobacter vibrioides (strain ATCC 19089 / CIP 103742 / CB 15) (Caulobacter crescentus), this protein is Putative NADH dehydrogenase/NAD(P)H nitroreductase CC_0061.